The following is a 164-amino-acid chain: UPF0114 protein Sbal223_3668 (164 aa).

Helical transmembrane passes span 15–35 (IMAPIYLGLSLVLIGLGIKFF), 53–73 (LVLVTLSLIDITLVGGLIVMV), 108–128 (KVAASIVAISSIHLLKIFMDV), and 136–156 (IMWYLLIHITFVLSAFAMGYL).

This sequence belongs to the UPF0114 family.

It localises to the cell membrane. The polypeptide is UPF0114 protein Sbal223_3668 (Shewanella baltica (strain OS223)).